We begin with the raw amino-acid sequence, 153 residues long: Transcriptional repressor NrdR (153 aa).

A zinc finger lies at 3–34 (CPFCHNQDTRVIDSRAAEEGTAIRRRRSCPAC). One can recognise an ATP-cone domain in the interval 46–136 (LMVTKRSGAT…VYRSFESLED (91 aa)).

The protein belongs to the NrdR family. It depends on Zn(2+) as a cofactor.

In terms of biological role, negatively regulates transcription of bacterial ribonucleotide reductase nrd genes and operons by binding to NrdR-boxes. In Thermobifida fusca (strain YX), this protein is Transcriptional repressor NrdR.